The primary structure comprises 400 residues: Nicotinate phosphoribosyltransferase (400 aa).

The residue at position 220 (histidine 220) is a Phosphohistidine; by autocatalysis.

This sequence belongs to the NAPRTase family. Transiently phosphorylated on a His residue during the reaction cycle. Phosphorylation strongly increases the affinity for substrates and increases the rate of nicotinate D-ribonucleotide production. Dephosphorylation regenerates the low-affinity form of the enzyme, leading to product release.

It carries out the reaction nicotinate + 5-phospho-alpha-D-ribose 1-diphosphate + ATP + H2O = nicotinate beta-D-ribonucleotide + ADP + phosphate + diphosphate. It functions in the pathway cofactor biosynthesis; NAD(+) biosynthesis; nicotinate D-ribonucleotide from nicotinate: step 1/1. Catalyzes the synthesis of beta-nicotinate D-ribonucleotide from nicotinate and 5-phospho-D-ribose 1-phosphate at the expense of ATP. In Escherichia coli O17:K52:H18 (strain UMN026 / ExPEC), this protein is Nicotinate phosphoribosyltransferase.